Reading from the N-terminus, the 264-residue chain is Glutamate racemase (264 aa).

Substrate is bound by residues 10-11 and 42-43; these read DS and YG. Cys-73 acts as the Proton donor/acceptor in catalysis. 74 to 75 contacts substrate; the sequence is NT. The Proton donor/acceptor role is filled by Cys-183. 184-185 provides a ligand contact to substrate; the sequence is TH.

It belongs to the aspartate/glutamate racemases family.

It carries out the reaction L-glutamate = D-glutamate. It functions in the pathway cell wall biogenesis; peptidoglycan biosynthesis. Its function is as follows. Provides the (R)-glutamate required for cell wall biosynthesis. This is Glutamate racemase from Streptococcus sanguinis (strain SK36).